Consider the following 465-residue polypeptide: Cysteine--tRNA ligase (465 aa).

Cys29 lines the Zn(2+) pocket. Positions 31–41 match the 'HIGH' region motif; it reads PTVYNYIHIGN. Zn(2+) is bound by residues Cys209, His234, and Glu238. A 'KMSKS' region motif is present at residues 266–270; it reads KMSKS. Lys269 lines the ATP pocket. Position 270 is a phosphoserine (Ser270).

It belongs to the class-I aminoacyl-tRNA synthetase family. In terms of assembly, monomer. Requires Zn(2+) as cofactor.

Its subcellular location is the cytoplasm. The catalysed reaction is tRNA(Cys) + L-cysteine + ATP = L-cysteinyl-tRNA(Cys) + AMP + diphosphate. The protein is Cysteine--tRNA ligase of Bacillus cereus (strain G9842).